A 351-amino-acid polypeptide reads, in one-letter code: DNA integrity scanning protein DisA (351 aa).

In terms of domain architecture, DAC spans R4–F142. ATP contacts are provided by residues G71, L89, and T102–T106.

Belongs to the DisA family. In terms of assembly, homooctamer. Mg(2+) serves as cofactor.

It catalyses the reaction 2 ATP = 3',3'-c-di-AMP + 2 diphosphate. Its function is as follows. Participates in a DNA-damage check-point that is active prior to asymmetric division when DNA is damaged. DisA forms globular foci that rapidly scan along the chromosomes during sporulation, searching for lesions. When a lesion is present, DisA pauses at the lesion site. This triggers a cellular response that culminates in a temporary block in sporulation initiation. In terms of biological role, also has diadenylate cyclase activity, catalyzing the condensation of 2 ATP molecules into cyclic di-AMP (c-di-AMP). c-di-AMP acts as a signaling molecule that couples DNA integrity with progression of sporulation. The rise in c-di-AMP level generated by DisA while scanning the chromosome, operates as a positive signal that advances sporulation; upon encountering a lesion, the DisA focus arrests at the damaged site and halts c-di-AMP synthesis. This Symbiobacterium thermophilum (strain DSM 24528 / JCM 14929 / IAM 14863 / T) protein is DNA integrity scanning protein DisA.